Here is a 326-residue protein sequence, read N- to C-terminus: Vitamin B12 import system permease protein BtuC (326 aa).

9 consecutive transmembrane segments (helical) span residues 15–35 (WLLC…CAGE), 61–81 (LAVL…QALF), 88–108 (PGLL…VLLG), 112–132 (LPNW…TLIL), 146–166 (LLAG…AIYF), 184–204 (GGVD…LLWI), 240–260 (GWMV…GLVI), 274–294 (VLLP…DVVA), and 302–322 (ELPI…WLLL).

The protein belongs to the binding-protein-dependent transport system permease family. FecCD subfamily. In terms of assembly, the complex is composed of two ATP-binding proteins (BtuD), two transmembrane proteins (BtuC) and a solute-binding protein (BtuF).

It localises to the cell inner membrane. In terms of biological role, part of the ABC transporter complex BtuCDF involved in vitamin B12 import. Involved in the translocation of the substrate across the membrane. This Escherichia coli O17:K52:H18 (strain UMN026 / ExPEC) protein is Vitamin B12 import system permease protein BtuC.